The primary structure comprises 977 residues: uncharacterized protein (977 aa).

The span at 1–24 (MMQQRSGSLSLLSNAVQAGQSSDP) shows a compositional bias: polar residues. The disordered stretch occupies residues 1–65 (MMQQRSGSLS…HEKTKAGKDR (65 aa)). Positions 72-99 (CQSCRKKKVKCSGERPSCDQCLKHNIPC) form a DNA-binding region, zn(2)-C6 fungal-type. The disordered stretch occupies residues 176 to 195 (LSHPTIVPSSNSSSLLNSTN). Low complexity predominate over residues 177–195 (SHPTIVPSSNSSSLLNSTN). S220 bears the Phosphoserine mark. 3 disordered regions span residues 287 to 307 (TDSL…DSNR), 357 to 380 (NSAS…NNSL), and 751 to 774 (HTPI…ANGA). The span at 364-379 (STSYTNNNDTTSDNNS) shows a compositional bias: low complexity. Positions 751–770 (HTPINVTNGESQNNSNNDPS) are enriched in polar residues.

The protein resides in the cytoplasm. It localises to the nucleus. This is an uncharacterized protein from Schizosaccharomyces pombe (strain 972 / ATCC 24843) (Fission yeast).